Reading from the N-terminus, the 407-residue chain is 12S rRNA N(4)-cytidine methyltransferase METTL15 (407 aa).

The interval 44-63 (EAQEETDQTGIQELHRSQDR) is disordered. S-adenosyl-L-methionine contacts are provided by residues 100–102 (GGH), Asp119, Phe146, Asp169, and Gln176. Phosphoserine is present on Ser358. Residues 386-407 (EDEDVQDNPRGRSAKLRAAIKL) form a disordered region. The span at 397–407 (RSAKLRAAIKL) shows a compositional bias: basic residues.

The protein belongs to the methyltransferase superfamily. RsmH family.

It localises to the mitochondrion matrix. The enzyme catalyses cytidine(839) in 12S rRNA + S-adenosyl-L-methionine = N(4)-methylcytidine(839) in 12S rRNA + S-adenosyl-L-homocysteine + H(+). In terms of biological role, N4-methylcytidine (m4C) methyltransferase responsible for the methylation of position C839 in mitochondrial 12S rRNA. Involved in the stabilization of 12S rRNA folding, therefore facilitating the assembly of the mitochondrial small ribosomal subunits. The polypeptide is 12S rRNA N(4)-cytidine methyltransferase METTL15 (METTL15) (Bos taurus (Bovine)).